The following is a 77-amino-acid chain: U8-lycotoxin-Ls1a (77 aa).

The signal sequence occupies residues 1–20 (MKLIIFTGLVLFAIVSLIEA). The propeptide occupies 21 to 26 (QAENEK).

This sequence belongs to the neurotoxin 19 (CSTX) family. 08 (U8-Lctx) subfamily. Post-translationally, contains 4 disulfide bonds. In terms of tissue distribution, expressed by the venom gland.

Its subcellular location is the secreted. In Lycosa singoriensis (Wolf spider), this protein is U8-lycotoxin-Ls1a.